Here is a 638-residue protein sequence, read N- to C-terminus: ABC transporter G family member 12 (638 aa).

Residues 42-61 form a disordered region; that stretch reads KQEKAKKKNDTESSTGDMNT. Residues 58–301 enclose the ABC transporter domain; sequence DMNTGVSTTI…SLGYPCPNNT (244 aa). An ATP-binding site is contributed by 91–98; that stretch reads GPSGSGKS. Residues 374–633 enclose the ABC transmembrane type-2 domain; sequence GNFVARVGTA…WTSYLALHFL (260 aa). The next 7 membrane-spanning stretches (helical) occupy residues 376–396, 410–430, 459–479, 484–504, 516–536, 544–564, and 612–632; these read FVAR…CFAG, TIFF…SLFL, TLIV…FAHL, GHFF…DFMI, MTFA…GFYV, SFGW…LVVN, and FGVV…ALHF.

The protein belongs to the ABC transporter superfamily. ABCG family. Eye pigment precursor importer (TC 3.A.1.204) subfamily.

It localises to the membrane. This Dictyostelium discoideum (Social amoeba) protein is ABC transporter G family member 12 (abcG12).